Reading from the N-terminus, the 115-residue chain is MADTLLKCTTRHVRLFTARVDNQDLVPSADELTLDLDPDNEFLWSDAVVSKVQQRFQQLVEAGAGGELSDYSLRRIGTDLEGYIRQLLQAGELSYNPDGRVQNFSMGLPRTPDLL.

The protein belongs to the complex I NdhM subunit family. NDH-1 can be composed of about 15 different subunits; different subcomplexes with different compositions have been identified which probably have different functions.

It is found in the cellular thylakoid membrane. The enzyme catalyses a plastoquinone + NADH + (n+1) H(+)(in) = a plastoquinol + NAD(+) + n H(+)(out). It catalyses the reaction a plastoquinone + NADPH + (n+1) H(+)(in) = a plastoquinol + NADP(+) + n H(+)(out). Functionally, NDH-1 shuttles electrons from an unknown electron donor, via FMN and iron-sulfur (Fe-S) centers, to quinones in the respiratory and/or the photosynthetic chain. The immediate electron acceptor for the enzyme in this species is believed to be plastoquinone. Couples the redox reaction to proton translocation, and thus conserves the redox energy in a proton gradient. Cyanobacterial NDH-1 also plays a role in inorganic carbon-concentration. The protein is NAD(P)H-quinone oxidoreductase subunit M of Parasynechococcus marenigrum (strain WH8102).